The primary structure comprises 987 residues: MELFSRNVAAFWIILLEFLLGSVAEEEVLMNTKTETSDLKWTTHSRSKPEWEEVSGLDEENNSVRTYQICQADGSSSHWLRSKLIERRGASQVYVELFFTMVECSSRNTHHRSCKETFNLYYYQSDTDDATATHPAWMENPYTKVDTVAADFLLRKGGEKKVNVKTLRLGPLSKRGFYLAFQAQGACMALLSVRVFFKKCPALTRSLSVFPETVPRSLVQEAVGQCVANAAQPGPSPRPPKMFCGEDGQWVDQPTTTCTCLPGFEASHGELECRACPVGLFKMGSGTGPCSVCPENSQTGETGSAACVCRSGFYRALSDSADTPCTRPPSSPRSPVPQVNDTSLTLEWSEPLDSGGRSDLSYSVECRMCSTPGSPCTLCSDGVNYRPSQTGIQGRRVSIWGLRPHTTYSFTVMALNGVSAQSQQGPAGETINITTSPNVPVLVSGLRKSTATESSLTLYWNTPTQSHYRILQYQIRYCEKERGSEENSCHYMESNNNEVVLSDLRRATQYEVQVRARTFAGYGSFGKAILFRTLPDEDDSSSPLLVTGILIAMGMLLLIIVIGAAIYCIRKQNNYKDPELSDKNGQYLMGQGVKVYIDPFTYEDPNEAVREFAKEIDVSCVKIEEVIGAGEFGEVCRGRLRIPGKKENYVAIKTLKGGYTDKQRRDFLAEASIMGQFQHPNIIHLEGIITASCPVMILTEFMENGALDSFLRLNDGQFTPIQLVGMLRGIASGMKYLSEMSYVHRDLAARNILVNSNLVCKVSDFGLSRFLQENSSDPTYTSSLGGKIPIRWTAPEAIAFRKFTCASDVWSYGIVMWEVMSFGERPYWDMSNQDVINAIEQDYRLPPPPDCPTYLHQLMLDCWQKERTARPRFANIVSALDKLIRNPASLKITAQEGAGPSHPLLDQRSPLTPSSCGTVGDWLRAIKMERYEETFLQAGYTSMQLVTHINTEDLLRLGITLAGHQKKILSSIEALGIQNKAPGNVLY.

The first 24 residues, 1–24 (MELFSRNVAAFWIILLEFLLGSVA), serve as a signal peptide directing secretion. Over 25–548 (EEEVLMNTKT…DSSSPLLVTG (524 aa)) the chain is Extracellular. Residues 26-205 (EEVLMNTKTE…FFKKCPALTR (180 aa)) enclose the Eph LBD domain. Disulfide bonds link cysteine 70-cysteine 187 and cysteine 104-cysteine 114. The segment at 319–340 (DSADTPCTRPPSSPRSPVPQVN) is disordered. Pro residues predominate over residues 326–335 (TRPPSSPRSP). Fibronectin type-III domains follow at residues 328-438 (PPSS…TSPN) and 442-536 (LVSG…TLPD). Residues 549 to 569 (ILIAMGMLLLIIVIGAAIYCI) form a helical membrane-spanning segment. The Cytoplasmic portion of the chain corresponds to 570–987 (RKQNNYKDPE…QNKAPGNVLY (418 aa)). Residues 621–884 (VKIEEVIGAG…NIVSALDKLI (264 aa)) enclose the Protein kinase domain. ATP-binding positions include 627–635 (IGAGEFGEV) and lysine 653. The Proton acceptor role is filled by aspartate 746. One can recognise an SAM domain in the interval 914-978 (SSCGTVGDWL…LSSIEALGIQ (65 aa)).

The protein belongs to the protein kinase superfamily. Tyr protein kinase family. Ephrin receptor subfamily.

The protein localises to the cell membrane. The enzyme catalyses L-tyrosyl-[protein] + ATP = O-phospho-L-tyrosyl-[protein] + ADP + H(+). Its function is as follows. Receptor tyrosine kinase which binds promiscuously transmembrane ephrin-B family ligands residing on adjacent cells, leading to contact-dependent bidirectional signaling into neighboring cells. The signaling pathway downstream of the receptor is referred to as forward signaling while the signaling pathway downstream of the ephrin ligand is referred to as reverse signaling. Together with its cognate ligand/functional ligand EFNB2 is involved in the regulation of cell adhesion and cell migration, and plays a central role in heart morphogenesis, angiogenesis and blood vessel remodeling and permeability. EPHB4-mediated forward signaling controls cellular repulsion and segregation from EFNB2-expressing cells. Involved in somitogenesis. The chain is Ephrin type-B receptor 4a from Danio rerio (Zebrafish).